The primary structure comprises 152 residues: UPF0178 protein YPTS_2857 (152 aa).

It belongs to the UPF0178 family.

The protein is UPF0178 protein YPTS_2857 of Yersinia pseudotuberculosis serotype IB (strain PB1/+).